The chain runs to 520 residues: Zinc finger and BTB domain-containing protein 18 (520 aa).

A BTB domain is found at cysteine 24–glycine 91. Residues alanine 121–glutamate 140 form a disordered region. 4 consecutive C2H2-type zinc fingers follow at residues phenylalanine 368–histidine 390, proline 408–histidine 430, tyrosine 436–histidine 458, and histidine 464–histidine 487.

The protein belongs to the krueppel C2H2-type zinc-finger protein family. ZBTB18 subfamily.

Its subcellular location is the nucleus. Functionally, transcriptional repressor that plays a role in various developmental processes. Specifically binds the consensus DNA sequence 5'-[AC]ACATCTG[GT][AC]-3' which contains the E box core, and acts by recruiting chromatin remodeling multiprotein complexes. The sequence is that of Zinc finger and BTB domain-containing protein 18 (zbtb18) from Xenopus laevis (African clawed frog).